Consider the following 477-residue polypeptide: Bifunctional protein HldE (477 aa).

Residues 1–320 (MKDSLPAFEK…SLSDTHHSET (320 aa)) are ribokinase. Position 195–198 (195–198 (NLHE)) interacts with ATP. Residue aspartate 264 is part of the active site. The cytidylyltransferase stretch occupies residues 346–477 (MTNGCFDILH…KIIENIMANQ (132 aa)).

In the N-terminal section; belongs to the carbohydrate kinase PfkB family. This sequence in the C-terminal section; belongs to the cytidylyltransferase family. Homodimer.

The catalysed reaction is D-glycero-beta-D-manno-heptose 7-phosphate + ATP = D-glycero-beta-D-manno-heptose 1,7-bisphosphate + ADP + H(+). The enzyme catalyses D-glycero-beta-D-manno-heptose 1-phosphate + ATP + H(+) = ADP-D-glycero-beta-D-manno-heptose + diphosphate. It participates in nucleotide-sugar biosynthesis; ADP-L-glycero-beta-D-manno-heptose biosynthesis; ADP-L-glycero-beta-D-manno-heptose from D-glycero-beta-D-manno-heptose 7-phosphate: step 1/4. Its pathway is nucleotide-sugar biosynthesis; ADP-L-glycero-beta-D-manno-heptose biosynthesis; ADP-L-glycero-beta-D-manno-heptose from D-glycero-beta-D-manno-heptose 7-phosphate: step 3/4. Functionally, catalyzes the phosphorylation of D-glycero-D-manno-heptose 7-phosphate at the C-1 position to selectively form D-glycero-beta-D-manno-heptose-1,7-bisphosphate. Its function is as follows. Catalyzes the ADP transfer from ATP to D-glycero-beta-D-manno-heptose 1-phosphate, yielding ADP-D-glycero-beta-D-manno-heptose. The chain is Bifunctional protein HldE from Shewanella piezotolerans (strain WP3 / JCM 13877).